Consider the following 832-residue polypeptide: tRNA ligase (832 aa).

The N6-AMP-lysine intermediate role is filled by Lys-108.

The protein belongs to the TRL1 family.

It carries out the reaction ATP + (ribonucleotide)n-3'-hydroxyl + 5'-phospho-(ribonucleotide)m = (ribonucleotide)n+m + AMP + diphosphate.. Functionally, one of the two proteins required for the splicing of precursor tRNA molecules containing introns. The ligation activity requires three enzymatic activities: phosphorylation of the 5' terminus of the 3' half-tRNA in the presence of ATP, opening of the 2'3'-cyclic phosphodiester bond of the 5' half-tRNA leaving a 2'-phosphomonoester and ligation of the two tRNA halves in an ATP-dependent reaction. The chain is tRNA ligase (LIG1) from Candida albicans (strain SC5314 / ATCC MYA-2876) (Yeast).